A 573-amino-acid polypeptide reads, in one-letter code: Cytochrome P450 monooxygenase GME11363 (573 aa).

Residues 10-30 (IGVVAAVLLAALILLYRAALP) form a helical membrane-spanning segment. A heme-binding site is contributed by Cys-519.

Belongs to the cytochrome P450 family. Requires heme as cofactor.

Its subcellular location is the membrane. The protein operates within secondary metabolite biosynthesis. Functionally, cytochrome P450 monooxygenase; part of the gene cluster that mediates the biosynthesis of dibenzodioxocinones such as pestalotiollide B, a novel class of inhibitors against cholesterol ester transfer protein (CEPT). The biosynthesis initiates from condensation of acetate and malonate units catalyzed by the non-reducing PKS pks8/GME11356. Pks8/GME11356 lacks a thioesterase (TE) domain, which is important to the cyclizing of the third ring of atrochrysone carboxylic acid, and the esterase GME11355 might play the role of TE and catalyzes the cyclization reaction of the C ring. The lactamase-like protein GME11357 (or other beta-lactamases in Pestalotiopsis microspora) probably hydrolyzes the thioester bond between the ACP of pks8/GME11356 and the intermediate to release atrochrysone carboxylic acid, which is spontaneously dehydrates to form endocrocin anthrone. Endocrocin anthrone is further converted to emodin via the endocrocin intermediate. Emodin is then oxidized by several enzymes such as the Baeyer-Villiger oxidase GME11358, the oxidoreductase GME11367, the short chain dehydrogenase/reductase GME11373, as well as by other oxidoreductases from the cluster, to modify the A and C rings and open the B ring, and finally yield monodictyphenone. The prenyltransferase GME11375 may catalyze the addition reaction between the C5 side chains and the carbon bone of dibenzodioxocinones. The remaining biochemical reactions to the final product dibenzodioxocinones should be methylation catalyzed by methyltransferase GME11366 and reduction and lactonization reaction catalyzed by a series of oxidordeuctases. The protein is Cytochrome P450 monooxygenase GME11363 of Pestalotiopsis microspora.